Here is a 277-residue protein sequence, read N- to C-terminus: Cell division protein ZipA (277 aa).

The Periplasmic portion of the chain corresponds to 1–5 (MQDLR). A helical transmembrane segment spans residues 6 to 26 (LMLLLFGVITIIVLFLHGVWA). Over 27–277 (RRKERSALFY…NALIRSTPHL (251 aa)) the chain is Cytoplasmic. The segment at 120–139 (QKKSDDLSHQSKETHHPSIQ) is disordered.

Belongs to the ZipA family. In terms of assembly, interacts with FtsZ via their C-terminal domains.

The protein localises to the cell inner membrane. Essential cell division protein that stabilizes the FtsZ protofilaments by cross-linking them and that serves as a cytoplasmic membrane anchor for the Z ring. Also required for the recruitment to the septal ring of downstream cell division proteins. The protein is Cell division protein ZipA of Hamiltonella defensa subsp. Acyrthosiphon pisum (strain 5AT).